Here is a 370-residue protein sequence, read N- to C-terminus: Allatostatins (370 aa).

Residues 1–27 (MSGPRTCFCLPSALVLVLLSLSTSALG) form the signal peptide. Positions 28–65 (TAPEPSGVHEESPAGGGTDLLPHPEDLSASDNPDLEFV) are excised as a propeptide. Positions 29–58 (APEPSGVHEESPAGGGTDLLPHPEDLSASD) are disordered. Leucine amide occurs at positions 73, 94, 105, and 117. Residues 121–151 (DYDYYGEEDEDDQQAIGDEDIEESDVGDLMD) constitute a propeptide that is removed on maturation. Leucine amide is present on residues Leu-161, Leu-172, Leu-188, Leu-200, Leu-213, and Leu-232. Positions 236–251 (SDDIDFRELEEKFAED) are excised as a propeptide. A Leucine amide modification is found at Leu-264. A propeptide spanning residues 268–345 (EVEPSELEAV…ITPEEFSRMV (78 aa)) is cleaved from the precursor. The interval 273-298 (ELEAVRNEEKDNSSVHDKKNNTNDMH) is disordered. A Leucine amide modification is found at Leu-353. Residue Ile-364 is modified to Isoleucine amide. The propeptide occupies 368 to 370 (SER).

This sequence belongs to the allatostatin family. Brain, subesophageal ganglion and corpus allatum.

Its subcellular location is the secreted. Neuropeptide inhibitors of juvenile hormone synthesis and gut muscle contraction. This chain is Allatostatins, found in Diploptera punctata (Pacific beetle cockroach).